Here is a 328-residue protein sequence, read N- to C-terminus: Probable nicotianamine synthase 6 (328 aa).

It belongs to the nicotianamine synthase (NAS)-like family.

The catalysed reaction is 3 S-adenosyl-L-methionine = nicotianamine + 3 S-methyl-5'-thioadenosine + 3 H(+). Synthesizes nicotianamine, a polyamine that is the first intermediate in the synthesis of the phytosiderophores of the mugineic acid type found in gramineae which serves as a sensor for the physiological iron status within the plant, and/or might be involved in the transport of iron. The sequence is that of Probable nicotianamine synthase 6 (NAS6) from Hordeum vulgare (Barley).